Here is a 919-residue protein sequence, read N- to C-terminus: Phosphoenolpyruvate carboxylase (919 aa).

Active-site residues include histidine 138 and lysine 579.

This sequence belongs to the PEPCase type 1 family. Mg(2+) is required as a cofactor.

The catalysed reaction is oxaloacetate + phosphate = phosphoenolpyruvate + hydrogencarbonate. In terms of biological role, forms oxaloacetate, a four-carbon dicarboxylic acid source for the tricarboxylic acid cycle. This chain is Phosphoenolpyruvate carboxylase, found in Corynebacterium glutamicum (Brevibacterium saccharolyticum).